The primary structure comprises 263 residues: Ribosomal RNA large subunit methyltransferase E (263 aa).

Residues 1–34 (MSSAEGPKSGGGSKGSKSEASSRVRGSAPTGSRD) form a disordered region. Positions 102, 104, 126, 142, and 166 each coordinate S-adenosyl-L-methionine. Lys206 (proton acceptor) is an active-site residue.

It belongs to the class I-like SAM-binding methyltransferase superfamily. RNA methyltransferase RlmE family.

The protein localises to the cytoplasm. The enzyme catalyses uridine(2552) in 23S rRNA + S-adenosyl-L-methionine = 2'-O-methyluridine(2552) in 23S rRNA + S-adenosyl-L-homocysteine + H(+). Its function is as follows. Specifically methylates the uridine in position 2552 of 23S rRNA at the 2'-O position of the ribose in the fully assembled 50S ribosomal subunit. This is Ribosomal RNA large subunit methyltransferase E from Rhodospirillum rubrum (strain ATCC 11170 / ATH 1.1.1 / DSM 467 / LMG 4362 / NCIMB 8255 / S1).